Reading from the N-terminus, the 443-residue chain is Xaa-Pro dipeptidase (443 aa).

Mn(2+)-binding residues include Asp-246, Asp-257, His-339, Glu-384, and Glu-423.

The protein belongs to the peptidase M24B family. Bacterial-type prolidase subfamily. The cofactor is Mn(2+).

The enzyme catalyses Xaa-L-Pro dipeptide + H2O = an L-alpha-amino acid + L-proline. In terms of biological role, splits dipeptides with a prolyl residue in the C-terminal position. This chain is Xaa-Pro dipeptidase, found in Klebsiella pneumoniae (strain 342).